Consider the following 368-residue polypeptide: Phosphoserine aminotransferase (368 aa).

Arg42 contributes to the L-glutamate binding site. Residues Trp101, Thr151, Asp175, and Gln198 each coordinate pyridoxal 5'-phosphate. Lys199 is modified (N6-(pyridoxal phosphate)lysine). Residue 240–241 (NT) coordinates pyridoxal 5'-phosphate.

This sequence belongs to the class-V pyridoxal-phosphate-dependent aminotransferase family. SerC subfamily. In terms of assembly, homodimer. It depends on pyridoxal 5'-phosphate as a cofactor.

Its subcellular location is the cytoplasm. The enzyme catalyses O-phospho-L-serine + 2-oxoglutarate = 3-phosphooxypyruvate + L-glutamate. It carries out the reaction 4-(phosphooxy)-L-threonine + 2-oxoglutarate = (R)-3-hydroxy-2-oxo-4-phosphooxybutanoate + L-glutamate. The protein operates within amino-acid biosynthesis; L-serine biosynthesis; L-serine from 3-phospho-D-glycerate: step 2/3. It functions in the pathway cofactor biosynthesis; pyridoxine 5'-phosphate biosynthesis; pyridoxine 5'-phosphate from D-erythrose 4-phosphate: step 3/5. Catalyzes the reversible conversion of 3-phosphohydroxypyruvate to phosphoserine and of 3-hydroxy-2-oxo-4-phosphonooxybutanoate to phosphohydroxythreonine. This chain is Phosphoserine aminotransferase, found in Polaromonas sp. (strain JS666 / ATCC BAA-500).